The following is a 134-amino-acid chain: MSEAVTIRTRKFMTNRLLQRKQMVVDILHPGKANISKNDLREKLGQMYKTDASAVQAFGLRTHYGGGRTTGFALIYDDVEAMKKFEPHYRLVRVGHAEPIQKVARQQRKQRKNRGKKVFGTGKRLAKRKSKQQD.

Position 2 is an N-acetylserine (Ser-2). A disordered region spans residues 100-134 (IQKVARQQRKQRKNRGKKVFGTGKRLAKRKSKQQD). Composition is skewed to basic residues over residues 105 to 117 (RQQR…RGKK) and 124 to 134 (RLAKRKSKQQD).

The protein belongs to the eukaryotic ribosomal protein eS24 family. As to quaternary structure, component of the small ribosomal subunit (SSU). Mature yeast ribosomes consist of a small (40S) and a large (60S) subunit. The 40S small subunit contains 1 molecule of ribosomal RNA (18S rRNA) and at least 33 different proteins. The large 60S subunit contains 3 rRNA molecules (25S, 5.8S and 5S rRNA) and at least 46 different proteins.

Its subcellular location is the cytoplasm. In terms of biological role, component of the ribosome, a large ribonucleoprotein complex responsible for the synthesis of proteins in the cell. The small ribosomal subunit (SSU) binds messenger RNAs (mRNAs) and translates the encoded message by selecting cognate aminoacyl-transfer RNA (tRNA) molecules. The large subunit (LSU) contains the ribosomal catalytic site termed the peptidyl transferase center (PTC), which catalyzes the formation of peptide bonds, thereby polymerizing the amino acids delivered by tRNAs into a polypeptide chain. The nascent polypeptides leave the ribosome through a tunnel in the LSU and interact with protein factors that function in enzymatic processing, targeting, and the membrane insertion of nascent chains at the exit of the ribosomal tunnel. The polypeptide is Small ribosomal subunit protein eS24A (rps2401) (Schizosaccharomyces pombe (strain 972 / ATCC 24843) (Fission yeast)).